The primary structure comprises 69 residues: uncharacterized protein (69 aa).

The segment at E48–D69 is disordered.

This is an uncharacterized protein from Salmonella phage P22 (Bacteriophage P22).